Consider the following 126-residue polypeptide: Nitrogenase-stabilizing/protective protein NifW (126 aa).

The disordered stretch occupies residues 104-126 (VPMSEITVERPATTQTDEKGQQR).

It belongs to the NifW family. As to quaternary structure, homotrimer; associates with NifD.

In terms of biological role, may protect the nitrogenase Fe-Mo protein from oxidative damage. This is Nitrogenase-stabilizing/protective protein NifW from Parafrankia sp. (strain EAN1pec).